A 539-amino-acid polypeptide reads, in one-letter code: CTP synthase (539 aa).

An amidoligase domain region spans residues 1 to 267 (MTKYIFVTGG…DQKVCDFLHI (267 aa)). A CTP-binding site is contributed by S13. S13 contacts UTP. 14-19 (SLGKGI) is a binding site for ATP. Y54 provides a ligand contact to L-glutamine. An ATP-binding site is contributed by D71. 2 residues coordinate Mg(2+): D71 and E141. Residues 148 to 150 (DME), 188 to 193 (KTKPTQ), and K224 each bind CTP. UTP is bound by residues 188–193 (KTKPTQ) and K224. In terms of domain architecture, Glutamine amidotransferase type-1 spans 294-537 (KITLVGKYVE…IGAASGLPEQ (244 aa)). L-glutamine is bound at residue G356. Residue C383 is the Nucleophile; for glutamine hydrolysis of the active site. L-glutamine contacts are provided by residues 384 to 387 (LGMQ), E407, and R465. Residues H510 and E512 contribute to the active site.

Belongs to the CTP synthase family. As to quaternary structure, homotetramer.

It catalyses the reaction UTP + L-glutamine + ATP + H2O = CTP + L-glutamate + ADP + phosphate + 2 H(+). The catalysed reaction is L-glutamine + H2O = L-glutamate + NH4(+). It carries out the reaction UTP + NH4(+) + ATP = CTP + ADP + phosphate + 2 H(+). It participates in pyrimidine metabolism; CTP biosynthesis via de novo pathway; CTP from UDP: step 2/2. With respect to regulation, allosterically activated by GTP, when glutamine is the substrate; GTP has no effect on the reaction when ammonia is the substrate. The allosteric effector GTP functions by stabilizing the protein conformation that binds the tetrahedral intermediate(s) formed during glutamine hydrolysis. Inhibited by the product CTP, via allosteric rather than competitive inhibition. Functionally, catalyzes the ATP-dependent amination of UTP to CTP with either L-glutamine or ammonia as the source of nitrogen. Regulates intracellular CTP levels through interactions with the four ribonucleotide triphosphates. This is CTP synthase from Lactobacillus helveticus (strain DPC 4571).